Reading from the N-terminus, the 275-residue chain is MTQALQALIDQAWEDRTSLSPKSAPNDIREAVANVISQLDSGALRVAEKQGKDWIVNQWIKKAVLLSFRLEDNAPMSAGGFAQFYDKVPTKFANWSADDFAKAGFRVVPPAVARRGSFIAKNAVLMPSYVNIGAYVDEGTMVDTWATVGSCAQIGKNVHLSGGVGIGGVLEPLQANPVIIEDNCFIGARSEVVEGVIVEENSVISMGVYLGQSTKIYDRETGEIHYGRVPAGSVVVAGNLPSKDGKYSLYCAVIVKKVDAQTRAKTSLNDLLRGD.

Residues Arg106 and Asp143 each coordinate substrate.

This sequence belongs to the transferase hexapeptide repeat family. As to quaternary structure, homotrimer.

Its subcellular location is the cytoplasm. It catalyses the reaction (S)-2,3,4,5-tetrahydrodipicolinate + succinyl-CoA + H2O = (S)-2-succinylamino-6-oxoheptanedioate + CoA. It functions in the pathway amino-acid biosynthesis; L-lysine biosynthesis via DAP pathway; LL-2,6-diaminopimelate from (S)-tetrahydrodipicolinate (succinylase route): step 1/3. The chain is 2,3,4,5-tetrahydropyridine-2,6-dicarboxylate N-succinyltransferase from Cupriavidus necator (strain ATCC 17699 / DSM 428 / KCTC 22496 / NCIMB 10442 / H16 / Stanier 337) (Ralstonia eutropha).